The following is a 529-amino-acid chain: DNA polymerase lambda (529 aa).

The BRCT domain maps to 14-109; that stretch reads DPEGMFAGMV…EKANEDLYVL (96 aa). The interval 119 to 199 is disordered; that stretch reads PKKSLPAISG…ESTSVYKPPD (81 aa). A compositionally biased stretch (polar residues) spans 153–175; sequence SHSNTQGSPDSPTSCSVPSTSAS. Residues 182–193 are compositionally biased toward low complexity; the sequence is ETPTSPQSESTS. Residues 213–227 form a DNA-binding region; the sequence is NIYRALGEDRRSFSY. Residue His260 is part of the active site. Residues 295 to 298 form a DNA-binding region; sequence GPAT. Residues Arg336, 367-370, and 376-379 contribute to the dCTP site; these read SYRR and GDLD. The interval 370-379 is involved in primer binding; sequence RGKATCGDLD. Asp377, Asp379, and Asp444 together coordinate Mn(2+). A DNA-binding region spans residues 418–459; the sequence is EEGTDSGVDTYFGLCTYPGQELRRRIDFKVYPRDIYSFGLIA. DCTP is bound at residue Asn467.

This sequence belongs to the DNA polymerase type-X family. In terms of assembly, interacts with the DNA repair proteins XRCC4 and LIG4. Interacts with HSP90-1. Mn(2+) serves as cofactor.

Its subcellular location is the nucleus. The catalysed reaction is DNA(n) + a 2'-deoxyribonucleoside 5'-triphosphate = DNA(n+1) + diphosphate. Repair polymerase involved in base excision repair (BER) and responsible for repair of lesions that give rise to abasic (AP) sites in DNA. Has both DNA polymerase and terminal transferase activities. Has a 5'-deoxyribose-5-phosphate lyase (dRP lyase) activity. Involved in the repair of transposon-induced DNA double strand breaks (DSBs). Involved in repair of UV-B-mediated DNA damage during seedling development through an excision repair mechanism. Involved the repair of DSBs induced by high salinity and DNA cross-linking agent. Functions via the DNA non-homologous end joining (NHEJ) pathway. The protein is DNA polymerase lambda of Arabidopsis thaliana (Mouse-ear cress).